Here is a 1349-residue protein sequence, read N- to C-terminus: Elongator complex protein 1 (1349 aa).

Phosphoserine occurs at positions 529, 539, 551, 636, and 828. Residues 919-1349 (QDVNVVYKSA…DFPKSHIVDF (431 aa)) are mediates dimerization. A phosphoserine; by HRR25 mark is found at serine 1198 and serine 1202. A phosphoserine mark is found at serine 1205 and serine 1209. The span at 1214-1228 (YTGKTGGTAKTGASR) shows a compositional bias: low complexity. The segment at 1214–1245 (YTGKTGGTAKTGASRRTAKNKRREERKRARGK) is disordered. Residues 1228–1246 (RRTAKNKRREERKRARGKK) are required for binding to tRNA.

The protein belongs to the ELP1/IKA1 family. As to quaternary structure, homodimer; dimerization promotes ELP1/IKI3 stability and elongator complex formation. Component of the elongator complex which consists of ELP1/IKI3, ELP2, ELP3, ELP4, ELP5/IKI1 and ELP6. The elongator complex is composed of two copies of the Elp123 subcomplex (composed of ELP1/IKI3, ELP2 and ELP3) and two copies of the Elp456 subcomplex (composed of ELP4, ELP5/IKI1 and ELP6). The Elp123 subcomplex forms a two-lobed scaffold, which binds the Elp456 subcomplex asymmetrically. In the complex, ELP1/IKI3 interacts with ELP2. In each lobe, ELP2 is tightly sandwiched between ELP1/IKI3 and ELP3. The Elp123 subcomplex binds tRNA through ELP1/IKI3 and ELP3 and can bind 2 tRNAs simultaneously. tRNA-binding induces conformational rearrangements which precisely position the targeted anticodon base in the active site. The Elp456 subcomplex binds tRNA and has ATPase activity. ELP1/IKI3 interacts with HRR25 and KTI12. Interacts with KTI11/DPH3. Post-translationally, phosphorylation promotes the tRNA modification function of the elongator complex.

Its subcellular location is the cytoplasm. The protein localises to the nucleus. It participates in tRNA modification; 5-methoxycarbonylmethyl-2-thiouridine-tRNA biosynthesis. Component of the elongator complex which is required for multiple tRNA modifications, including mcm5U (5-methoxycarbonylmethyl uridine), mcm5s2U (5-methoxycarbonylmethyl-2-thiouridine), and ncm5U (5-carbamoylmethyl uridine). The elongator complex catalyzes formation of carboxymethyluridine in the wobble base at position 34 in tRNAs. Functions as a gamma-toxin target (TOT); disruption of the complex confers resistance to Kluyveromyces lactis toxin zymocin (pGKL1 killer toxin). May also be involved in sensitivity to Pichia inositovora toxin. ELP1/IKI3 binds to tRNA, mediating interaction of the elongator complex with tRNA. Independently, may be involved in polarized exocytosis. The chain is Elongator complex protein 1 (IKI3) from Saccharomyces cerevisiae (strain ATCC 204508 / S288c) (Baker's yeast).